A 472-amino-acid chain; its full sequence is GTPase Der (472 aa).

EngA-type G domains lie at 3–166 (AVIA…PPAE) and 178–351 (IPVA…AAAH). GTP-binding positions include 9–16 (GRPNVGKS), 56–60 (DTGGM), 118–121 (NKTD), 184–191 (GRPNVGKS), 231–235 (DTAGV), and 296–299 (NKWD). One can recognise a KH-like domain in the interval 352 to 436 (RDLATPELND…PVRIECRASD (85 aa)). A disordered region spans residues 434 to 472 (ASDNPFADKPNQLTERQRRRRQRVIHHAKKREKKRKRRR). Positions 450–472 (QRRRRQRVIHHAKKREKKRKRRR) are enriched in basic residues.

The protein belongs to the TRAFAC class TrmE-Era-EngA-EngB-Septin-like GTPase superfamily. EngA (Der) GTPase family. As to quaternary structure, associates with the 50S ribosomal subunit.

In terms of biological role, GTPase that plays an essential role in the late steps of ribosome biogenesis. The polypeptide is GTPase Der (Halorhodospira halophila (strain DSM 244 / SL1) (Ectothiorhodospira halophila (strain DSM 244 / SL1))).